A 274-amino-acid chain; its full sequence is MVGRRALIVLAHSERTSFNYAMKEAAVAALKKKGWEVVESDLYAMNFNPIISRKDITGKLKDPENFQYPAESVLAYKEGHLSPDIVAEQKKLEAADLVIFQFPLQWFGVPAILKGWFERVFVGEFAYTYAAMYDKGPFRSKKAVLSITTGGSGSMYSLQGIHGDMNVILWPIQSGILHFCGFQVLEPQLTYSIGHTPADARIQILEGWKKRLENIWDETPLYFAPSSLFDLNFQAGFLMKKEVQDEEKNKKFGLSVGHHLGKSIPTDNQIKARK.

FAD is bound by residues histidine 12, 18 to 19 (FN), and glutamine 67. Position 82 is a phosphoserine (serine 82). FAD is bound at residue 104–107 (LQWF). 126 to 128 (AYT) is a binding site for substrate. Residues 148-151 (TTGG), tyrosine 156, and arginine 201 each bind FAD. Positions 225–274 (PSSLFDLNFQAGFLMKKEVQDEEKNKKFGLSVGHHLGKSIPTDNQIKARK) are important for apoenzyme conformational stability. Residues lysine 250 and lysine 251 each participate in a glycyl lysine isopeptide (Lys-Gly) (interchain with G-Cter in SUMO2) cross-link.

Belongs to the NAD(P)H dehydrogenase (quinone) family. As to quaternary structure, homodimer. Interacts with PDLIM4 isoform 2; this interaction stabilizes PDLIM4 isoform 2 in response to oxidative stress and protects it from ubiquitin-independent degradation by the core 20S proteasome. Interacts with TP73 (via SAM domain); this interaction is NADH-dependent, stabilizes TP73 in response to oxidative stress and protects it from ubiquitin-independent degradation by the 20S proteasome. Interacts with TP53; this interaction is NADH-dependent, stabilizes TP53 in response to oxidative stress and protects it from ubiquitin-independent degradation by the 20S proteasome. It depends on FAD as a cofactor.

Its subcellular location is the cytoplasm. The protein resides in the cytosol. The enzyme catalyses a quinone + NADH + H(+) = a quinol + NAD(+). It catalyses the reaction a quinone + NADPH + H(+) = a quinol + NADP(+). It carries out the reaction ubiquinone-10 + NADH + H(+) = ubiquinol-10 + NAD(+). The catalysed reaction is menadione + NADH + H(+) = menadiol + NAD(+). Functionally, flavin-containing quinone reductase that catalyzes two-electron reduction of quinones to hydroquinones using either NADH or NADPH as electron donors. In a ping-pong kinetic mechanism, the electrons are sequentially transferred from NAD(P)H to flavin cofactor and then from reduced flavin to the quinone, bypassing the formation of semiquinone and reactive oxygen species. Regulates cellular redox state primarily through quinone detoxification. Reduces components of plasma membrane redox system such as coenzyme Q and vitamin quinones, producing antioxidant hydroquinone forms. In the process may function as superoxide scavenger to prevent hydroquinone oxidation and facilitate excretion. Alternatively, can activate quinones and their derivatives by generating redox reactive hydroquinones with DNA cross-linking antitumor potential. Acts as a gatekeeper of the core 20S proteasome known to degrade proteins with unstructured regions. Upon oxidative stress, interacts with tumor suppressors TP53 and TP73 in a NADH-dependent way and inhibits their ubiquitin-independent degradation by the 20S proteasome. In Pongo abelii (Sumatran orangutan), this protein is NAD(P)H dehydrogenase [quinone] 1 (NQO1).